Reading from the N-terminus, the 323-residue chain is 8-oxo-dGDP phosphatase NUDT18 (323 aa).

A Nudix hydrolase domain is found at 37–167 (RLRKNVCYVV…DVLHLVELGA (131 aa)). A Mg(2+)-binding site is contributed by leucine 58. The Nudix box signature appears at 76–97 (GRMEPGETIVEAMQREVKEEAG).

The protein belongs to the Nudix hydrolase family. The cofactor is Mn(2+). Requires Mg(2+) as cofactor.

The catalysed reaction is 8-oxo-dGDP + H2O = 8-oxo-dGMP + phosphate + H(+). The enzyme catalyses 8-oxo-dADP + H2O = 8-oxo-dAMP + phosphate + H(+). It carries out the reaction 2-oxo-dADP + H2O = 2-oxo-dAMP + phosphate + H(+). It catalyses the reaction 8-oxo-GDP + H2O = 8-oxo-GMP + phosphate + H(+). Functionally, mediates the hydrolysis of oxidized nucleoside diphosphate derivatives. Hydrolyzes 8-oxo-7,8-dihydroguanine (8-oxo-Gua)-containing deoxyribo- and ribonucleoside diphosphates to the monophosphates. Hydrolyzes 8-oxo-dGDP and 8-oxo-GDP with the same efficiencies. Also hydrolyzes 8-OH-dADP and 2-OH-dADP. Exhibited no or minimal hydrolysis activity against 8-oxo-dGTP, 8-oxo-GTP, dGTP, GTP, dGDP and GDP. Probably removes oxidized guanine nucleotides from both the DNA and RNA precursor pools. The chain is 8-oxo-dGDP phosphatase NUDT18 from Mus musculus (Mouse).